Consider the following 398-residue polypeptide: Dual-specificity RNA methyltransferase RlmN (398 aa).

Catalysis depends on Glu-119, which acts as the Proton acceptor. The 240-residue stretch at Glu-125 to Asp-364 folds into the Radical SAM core domain. Cys-132 and Cys-369 are oxidised to a cystine. Residues Cys-139, Cys-143, and Cys-146 each coordinate [4Fe-4S] cluster. S-adenosyl-L-methionine contacts are provided by residues Gly-193 to Glu-194, Ser-225, Ser-247 to His-249, and Asn-326. Cys-369 (S-methylcysteine intermediate) is an active-site residue.

Belongs to the radical SAM superfamily. RlmN family. [4Fe-4S] cluster serves as cofactor.

The protein resides in the cytoplasm. It catalyses the reaction adenosine(2503) in 23S rRNA + 2 reduced [2Fe-2S]-[ferredoxin] + 2 S-adenosyl-L-methionine = 2-methyladenosine(2503) in 23S rRNA + 5'-deoxyadenosine + L-methionine + 2 oxidized [2Fe-2S]-[ferredoxin] + S-adenosyl-L-homocysteine. The enzyme catalyses adenosine(37) in tRNA + 2 reduced [2Fe-2S]-[ferredoxin] + 2 S-adenosyl-L-methionine = 2-methyladenosine(37) in tRNA + 5'-deoxyadenosine + L-methionine + 2 oxidized [2Fe-2S]-[ferredoxin] + S-adenosyl-L-homocysteine. Functionally, specifically methylates position 2 of adenine 2503 in 23S rRNA and position 2 of adenine 37 in tRNAs. m2A2503 modification seems to play a crucial role in the proofreading step occurring at the peptidyl transferase center and thus would serve to optimize ribosomal fidelity. In Yersinia pseudotuberculosis serotype IB (strain PB1/+), this protein is Dual-specificity RNA methyltransferase RlmN.